Reading from the N-terminus, the 254-residue chain is MISPDAARNVVGIIGNVISFGLFLAPVPTFWRICKRKDVEEFKADPYLATLLNCMLWVFYGIPIVHPNSILVVTINGIGLVVEGTYLFIFFLYSPNKKRLRMLAVLGVELVFMLAVILGVLLGAHTHKKRSMIVGILCVFFGSIMYFSPLTIMGKVIKTKSVEYMPFFLSLVCFLNGVCWTAYALIRFDIYVTIPNSLGAIFGAIQLILYACYYRTTPKKTKAAKDVEMPSVISGPGAAATASGGSVVSVTVER.

Over 1-9 the chain is Extracellular; the sequence is MISPDAARN. A helical transmembrane segment spans residues 10 to 30; that stretch reads VVGIIGNVISFGLFLAPVPTF. The MtN3/slv 1 domain maps to 10 to 98; it reads VVGIIGNVIS…IFFLYSPNKK (89 aa). Residues 31–45 are Cytoplasmic-facing; the sequence is WRICKRKDVEEFKAD. Residues 46 to 66 form a helical membrane-spanning segment; that stretch reads PYLATLLNCMLWVFYGIPIVH. At 67 to 69 the chain is on the extracellular side; sequence PNS. The helical transmembrane segment at 70–90 threads the bilayer; that stretch reads ILVVTINGIGLVVEGTYLFIF. The Cytoplasmic segment spans residues 91–101; that stretch reads FLYSPNKKRLR. Residues 102 to 122 traverse the membrane as a helical segment; that stretch reads MLAVLGVELVFMLAVILGVLL. At 123 to 131 the chain is on the extracellular side; sequence GAHTHKKRS. Residues 132-152 form a helical membrane-spanning segment; that stretch reads MIVGILCVFFGSIMYFSPLTI. A MtN3/slv 2 domain is found at 133–216; sequence IVGILCVFFG…LILYACYYRT (84 aa). The Cytoplasmic segment spans residues 153–165; sequence MGKVIKTKSVEYM. The helical transmembrane segment at 166–186 threads the bilayer; it reads PFFLSLVCFLNGVCWTAYALI. Residues 187 to 189 lie on the Extracellular side of the membrane; sequence RFD. Residues 190–210 traverse the membrane as a helical segment; the sequence is IYVTIPNSLGAIFGAIQLILY. At 211–254 the chain is on the cytoplasmic side; it reads ACYYRTTPKKTKAAKDVEMPSVISGPGAAATASGGSVVSVTVER.

The protein belongs to the SWEET sugar transporter family. In terms of assembly, forms homooligomers and/or heterooligomers.

Its subcellular location is the cell membrane. Functionally, mediates both low-affinity uptake and efflux of sugar across the plasma membrane. The protein is Bidirectional sugar transporter SWEET6b (SWEET6B) of Oryza sativa subsp. indica (Rice).